A 325-amino-acid chain; its full sequence is Phosphatidylserine decarboxylase proenzyme (325 aa).

Residues aspartate 90, histidine 147, and serine 253 each act as charge relay system; for autoendoproteolytic cleavage activity in the active site. Residue serine 253 is the Schiff-base intermediate with substrate; via pyruvic acid; for decarboxylase activity of the active site. A Pyruvic acid (Ser); by autocatalysis modification is found at serine 253. A disordered region spans residues methionine 281–serine 325. The span at lysine 284–asparagine 305 shows a compositional bias: polar residues.

The protein belongs to the phosphatidylserine decarboxylase family. PSD-B subfamily. Prokaryotic type I sub-subfamily. Heterodimer of a large membrane-associated beta subunit and a small pyruvoyl-containing alpha subunit. The cofactor is pyruvate. Is synthesized initially as an inactive proenzyme. Formation of the active enzyme involves a self-maturation process in which the active site pyruvoyl group is generated from an internal serine residue via an autocatalytic post-translational modification. Two non-identical subunits are generated from the proenzyme in this reaction, and the pyruvate is formed at the N-terminus of the alpha chain, which is derived from the carboxyl end of the proenzyme. The autoendoproteolytic cleavage occurs by a canonical serine protease mechanism, in which the side chain hydroxyl group of the serine supplies its oxygen atom to form the C-terminus of the beta chain, while the remainder of the serine residue undergoes an oxidative deamination to produce ammonia and the pyruvoyl prosthetic group on the alpha chain. During this reaction, the Ser that is part of the protease active site of the proenzyme becomes the pyruvoyl prosthetic group, which constitutes an essential element of the active site of the mature decarboxylase.

It localises to the cell membrane. The catalysed reaction is a 1,2-diacyl-sn-glycero-3-phospho-L-serine + H(+) = a 1,2-diacyl-sn-glycero-3-phosphoethanolamine + CO2. It participates in phospholipid metabolism; phosphatidylethanolamine biosynthesis; phosphatidylethanolamine from CDP-diacylglycerol: step 2/2. Catalyzes the formation of phosphatidylethanolamine (PtdEtn) from phosphatidylserine (PtdSer). The chain is Phosphatidylserine decarboxylase proenzyme from Alteromonas mediterranea (strain DSM 17117 / CIP 110805 / LMG 28347 / Deep ecotype).